A 217-amino-acid polypeptide reads, in one-letter code: Pyridoxine/pyridoxamine 5'-phosphate oxidase (217 aa).

Residues 13 to 16 (RREY) and Lys71 each bind substrate. FMN-binding positions include 66 to 71 (RIVLLK), 81 to 82 (YT), Arg87, Lys88, and Gln110. Substrate contacts are provided by Tyr128, Arg132, and Ser136. Residues 145-146 (QS) and Trp190 contribute to the FMN site. 196–198 (RLH) lines the substrate pocket. Arg200 contacts FMN.

This sequence belongs to the pyridoxamine 5'-phosphate oxidase family. In terms of assembly, homodimer. FMN is required as a cofactor.

The catalysed reaction is pyridoxamine 5'-phosphate + O2 + H2O = pyridoxal 5'-phosphate + H2O2 + NH4(+). It catalyses the reaction pyridoxine 5'-phosphate + O2 = pyridoxal 5'-phosphate + H2O2. Its pathway is cofactor metabolism; pyridoxal 5'-phosphate salvage; pyridoxal 5'-phosphate from pyridoxamine 5'-phosphate: step 1/1. It participates in cofactor metabolism; pyridoxal 5'-phosphate salvage; pyridoxal 5'-phosphate from pyridoxine 5'-phosphate: step 1/1. Functionally, catalyzes the oxidation of either pyridoxine 5'-phosphate (PNP) or pyridoxamine 5'-phosphate (PMP) into pyridoxal 5'-phosphate (PLP). The sequence is that of Pyridoxine/pyridoxamine 5'-phosphate oxidase from Proteus mirabilis (strain HI4320).